A 443-amino-acid chain; its full sequence is Ribulose bisphosphate carboxylase large chain (443 aa).

2 residues coordinate substrate: N89 and T139. K141 serves as the catalytic Proton acceptor. A substrate-binding site is contributed by K143. The Mg(2+) site is built by K167, D169, and E170. An N6-carboxylysine modification is found at K167. The Proton acceptor role is filled by H260. R261, H293, and S345 together coordinate substrate.

This sequence belongs to the RuBisCO large chain family. Type I subfamily. Heterohexadecamer of 8 large chains and 8 small chains; disulfide-linked. The disulfide link is formed within the large subunit homodimers. Mg(2+) serves as cofactor. In terms of processing, the disulfide bond which can form in the large chain dimeric partners within the hexadecamer appears to be associated with oxidative stress and protein turnover.

Its subcellular location is the plastid. The protein resides in the chloroplast. It carries out the reaction 2 (2R)-3-phosphoglycerate + 2 H(+) = D-ribulose 1,5-bisphosphate + CO2 + H2O. The catalysed reaction is D-ribulose 1,5-bisphosphate + O2 = 2-phosphoglycolate + (2R)-3-phosphoglycerate + 2 H(+). Functionally, ruBisCO catalyzes two reactions: the carboxylation of D-ribulose 1,5-bisphosphate, the primary event in carbon dioxide fixation, as well as the oxidative fragmentation of the pentose substrate in the photorespiration process. Both reactions occur simultaneously and in competition at the same active site. This Verbena bonariensis (Argentinian vervain) protein is Ribulose bisphosphate carboxylase large chain.